A 513-amino-acid chain; its full sequence is Xyloglucan 6-xylosyltransferase 4 (513 aa).

Residues 1–39 (MFQDGSRSSGSGRGLSTTAVSNGGWRTRGFLRGWQIQNT) are Cytoplasmic-facing. The helical; Signal-anchor for type II membrane protein transmembrane segment at 40-60 (LFNNIKFMILCCFVTILILLG) threads the bilayer. The Lumenal portion of the chain corresponds to 61 to 513 (TIRVGNLGSS…IRRMHMETKP (453 aa)). N-linked (GlcNAc...) asparagine glycosylation is found at Asn-76, Asn-110, Asn-142, Asn-174, and Asn-490.

The protein belongs to the glycosyltransferase 34 family.

The protein resides in the golgi apparatus membrane. The enzyme catalyses Transfers an alpha-D-xylosyl residue from UDP-D-xylose to a glucose residue in xyloglucan, forming an alpha-(1-&gt;6)-D-xylosyl-D-glucose linkage.. Functionally, xylosyltransferase specific to UDP-D-xylose that accepts cellohexaose as substrate to produce xyloglucan. The sequence is that of Xyloglucan 6-xylosyltransferase 4 from Arabidopsis thaliana (Mouse-ear cress).